The primary structure comprises 426 residues: Dihydroorotase (426 aa).

The Zn(2+) site is built by H58 and H60. Substrate is bound by residues 60–62 (HLR) and N92. Zn(2+)-binding residues include D150, H177, and H230. N276 is a substrate binding site. Position 303 (D303) interacts with Zn(2+). D303 is a catalytic residue. Residues H307 and 321–322 (FG) each bind substrate.

It belongs to the metallo-dependent hydrolases superfamily. DHOase family. Class I DHOase subfamily. Requires Zn(2+) as cofactor.

It carries out the reaction (S)-dihydroorotate + H2O = N-carbamoyl-L-aspartate + H(+). Its pathway is pyrimidine metabolism; UMP biosynthesis via de novo pathway; (S)-dihydroorotate from bicarbonate: step 3/3. Its function is as follows. Catalyzes the reversible cyclization of carbamoyl aspartate to dihydroorotate. The protein is Dihydroorotase of Listeria monocytogenes serotype 4b (strain CLIP80459).